A 208-amino-acid chain; its full sequence is Putative proteasome subunit alpha type-4-B (208 aa).

This sequence belongs to the peptidase T1A family. In terms of assembly, component of the 20S core complex of the 26S proteasome. The 26S proteasome is composed of a core protease (CP), known as the 20S proteasome, capped at one or both ends by the 19S regulatory particle (RP/PA700). The 20S proteasome core is composed of 28 subunits that are arranged in four stacked rings, resulting in a barrel-shaped structure. The two end rings are each formed by seven alpha subunits, and the two central rings are each formed by seven beta subunits. The catalytic chamber with the active sites is on the inside of the barrel.

It localises to the cytoplasm. Its subcellular location is the nucleus. The proteasome is a multicatalytic proteinase complex which is characterized by its ability to cleave peptides with Arg, Phe, Tyr, Leu, and Glu adjacent to the leaving group at neutral or slightly basic pH. The proteasome has an ATP-dependent proteolytic activity. This chain is Putative proteasome subunit alpha type-4-B (PAC2), found in Arabidopsis thaliana (Mouse-ear cress).